The chain runs to 83 residues: Small ribosomal subunit protein bS16 (83 aa).

The protein belongs to the bacterial ribosomal protein bS16 family.

This chain is Small ribosomal subunit protein bS16, found in Syntrophus aciditrophicus (strain SB).